A 416-amino-acid polypeptide reads, in one-letter code: Glutamyl-tRNA reductase (416 aa).

Substrate is bound by residues 46–49 (TCNR), Ser-97, 102–104 (DHE), and Gln-108. Residue Cys-47 is the Nucleophile of the active site. An NADP(+)-binding site is contributed by 178–183 (GAGMAA).

Belongs to the glutamyl-tRNA reductase family. In terms of assembly, homodimer.

It carries out the reaction (S)-4-amino-5-oxopentanoate + tRNA(Glu) + NADP(+) = L-glutamyl-tRNA(Glu) + NADPH + H(+). The protein operates within porphyrin-containing compound metabolism; protoporphyrin-IX biosynthesis; 5-aminolevulinate from L-glutamyl-tRNA(Glu): step 1/2. Catalyzes the NADPH-dependent reduction of glutamyl-tRNA(Glu) to glutamate 1-semialdehyde (GSA). The protein is Glutamyl-tRNA reductase of Aeropyrum pernix (strain ATCC 700893 / DSM 11879 / JCM 9820 / NBRC 100138 / K1).